Consider the following 495-residue polypeptide: MAKNNAVAGFNALNGVELNLFTTDELKAIHYATMEVLMDPGIQVSDPEARQIFKENGCEVDEKTNVVKIPEYLVRKALQLAPSRFILWGRDKKFNTVQECGGKVHWTCFGTGVKMCKYQDGKYVTVDSVEKDIADIAKLCDWAENIDYFSLPVSARDIAGQGAQDVHETLTPIANTAKHFHHIDPVGENVEYYRDIVKAYYGGDEEEARKKPIFSMLLCPTSPLELSVNACQVIIKGARYGIPVNVLSMAMSGGSSPVYLAGTLVTHNAEVLSGIVLAQLTVPGAKVWYGSSTTTFDLKKGTAPVGSPELGLISAAVAKLAQFYGLPSYVAGSOSDAKVPDDQAGHEKTMTTLLPALSGANTIYGAGMLELGMTFSMEQLVIDNDIFSMVKKAMKGIPVSEETLAVESIQKVGIGNNFLALKQTRQLVDYPSNPMLLDRHMFGDWAAAGSKDLATVAHEKVEDVLKNHQVTPIDADILKDMQAIVDKADKAFRGM.

Residue Pyl-334 is a non-standard amino acid, pyrrolysine.

The protein belongs to the trimethylamine methyltransferase family.

It carries out the reaction Co(I)-[trimethylamine-specific corrinoid protein] + trimethylamine + H(+) = methyl-Co(III)-[trimethylamine-specific corrinoid protein] + dimethylamine. It functions in the pathway one-carbon metabolism; methanogenesis from trimethylamine. Its function is as follows. Catalyzes the transfer of a methyl group from trimethylamine to the corrinoid cofactor of MttC. This Methanosarcina barkeri (strain Fusaro / DSM 804) protein is Trimethylamine methyltransferase MttB (mttB).